A 162-amino-acid chain; its full sequence is Endoribonuclease YbeY (162 aa).

Zn(2+)-binding residues include H118, H122, and H128.

The protein belongs to the endoribonuclease YbeY family. It depends on Zn(2+) as a cofactor.

It localises to the cytoplasm. Its function is as follows. Single strand-specific metallo-endoribonuclease involved in late-stage 70S ribosome quality control and in maturation of the 3' terminus of the 16S rRNA. In Caulobacter sp. (strain K31), this protein is Endoribonuclease YbeY.